We begin with the raw amino-acid sequence, 916 residues long: MAYHGSGPQSPGEHTYDDGHQLRDLSHSNTSYEEEASHGLLSSQQSPFAGPFDDPHQQRGLTASPVQRPTSGYSLTESYAPDAAYHDPYSANQSVYSGHSENPAAAFGVPGRVASPYARSETSSTEAWRQRQAGAAGGGNGLRRYATRKVKLVQGSVLSVDYPVPSAIQNAIQAKYRNDLEGGSEEFTHMRYTAATCDPNEFTLHNGYNLRPAMYNRHTELLIAITYYNEDKTLTARTLHGVMQNIRDIVNLKKSEFWNKGGPAWQKIVVCLVFDGIDPCDKDTLDVLATVGIYQDGVMKRDVDGKETVAHIFEYTTQLSVTPNQQLIRPTDDGPSTLPPVQMMFCLKQKNSKKINSHRWLFNAFGRILNPEVCILLDAGTKPGPKSLLYLWEAFYNDKDLGGACGEIHAMLGKGWKKLLNPLVAAQNFEYKISNILDKPLESSFGYVSVLPGAFSAYRFRAIMGRPLEQYFHGDHTLSKQLGKKGIEGMNIFKKNMFLAEDRILCFELVAKAGSKWHLSYVKASKGETDVPEGAPEFISQRRRWLNGSFAAGIYSLMHFGRMYKSGHNIVRMFFLHLQMLYNWFSTFLTWFSLASYWLTTSVIMDLVGTPSSSNGYTAFPFGKTATPIINTLVKYIYLAFLLLQFILALGNRPKGSKLSYLASFVAFGIIQLYVVVDALYLVVRAFTGGAPMDFNTDDGIGAFLSSFFGSSGAGIIIIALAATFGLYFVASFMYLDPWHMFTSFPAYMAVQSSYINILNVYAFSNWHDVSWGTKGSDKADALPSAKTTGGKGEEAVIEEIDKPQADIDSQFEATVKRALTPYVPPEEKEEKSLDDSYKSFRTRLVTLWLFSNGLLAVCITSEGLDKFGFTNTSTERTSRFFQALLWSNAVVALIRFIGATWFLGKTGLLCCFARR.

2 disordered regions span residues 1–75 (MAYH…GYSL) and 118–141 (ARSETSSTEAWRQRQAGAAGGGNG). A compositionally biased stretch (basic and acidic residues) spans 14-26 (HTYDDGHQLRDLS). Polar residues predominate over residues 59–75 (RGLTASPVQRPTSGYSL). The next 7 helical transmembrane spans lie at 544–561 (RWLNGSFAAGIYSLMHFG), 588–608 (FLTWFSLASYWLTTSVIMDLV), 629–649 (IINTLVKYIYLAFLLLQFILA), 664–684 (SFVAFGIIQLYVVVDALYLVV), 716–736 (IIIIALAATFGLYFVASFMYL), 845–865 (LVTLWLFSNGLLAVCITSEGL), and 884–904 (ALLWSNAVVALIRFIGATWFL).

This sequence belongs to the chitin synthase family. Class III subfamily. Interacts with kibesin kinA. In terms of processing, activity requires trypsin activation, suggesting a zymogenic nature. Post-translationally, phosphorylated at yet unidentified residues in a N-terminal disordered region-dependent manner.

It localises to the cell membrane. It is found in the cell tip. The protein localises to the cell septum. The catalysed reaction is [(1-&gt;4)-N-acetyl-beta-D-glucosaminyl](n) + UDP-N-acetyl-alpha-D-glucosamine = [(1-&gt;4)-N-acetyl-beta-D-glucosaminyl](n+1) + UDP + H(+). With respect to regulation, activity is stimulated by Mg(2+) and is inhibited by polyoxin D. In terms of biological role, polymerizes chitin, a structural polymer of the cell wall and septum, by transferring the sugar moiety of UDP-GlcNAc to the non-reducing end of the growing chitin polymer. Does not substantially contribute to the rigidity of the cell wall but is necessary for normal hyphal growth and organization. In addition to its functions in the formation of normal cell walls of hyphae, is also involved in conidiophore and conidia development. This chain is Chitin synthase B, found in Emericella nidulans (strain FGSC A4 / ATCC 38163 / CBS 112.46 / NRRL 194 / M139) (Aspergillus nidulans).